The primary structure comprises 582 residues: Glutamine--tRNA ligase (582 aa).

The 'HIGH' region motif lies at 50–60; it reads PEPNGYLHIGH. ATP contacts are provided by residues 51-53 and 57-63; these read EPN and HIGHAKS. The L-glutamine site is built by D83 and Y235. ATP contacts are provided by residues T254 and 289 to 290; that span reads RL. Residues 296-300 carry the 'KMSKS' region motif; the sequence is ITSKR.

The protein belongs to the class-I aminoacyl-tRNA synthetase family. As to quaternary structure, monomer.

It localises to the cytoplasm. The catalysed reaction is tRNA(Gln) + L-glutamine + ATP = L-glutaminyl-tRNA(Gln) + AMP + diphosphate. The polypeptide is Glutamine--tRNA ligase (Cupriavidus metallidurans (strain ATCC 43123 / DSM 2839 / NBRC 102507 / CH34) (Ralstonia metallidurans)).